Here is a 539-residue protein sequence, read N- to C-terminus: Gamma-2-syntrophin (539 aa).

Residues 73–156 (TVTLRRQPVG…DVTITVEYLR (84 aa)) form the PDZ domain. Residues 296 to 421 (QVVHMGWVNE…WEKAFQRATF (126 aa)) enclose the PH domain.

Belongs to the syntrophin family. In terms of assembly, interacts with the dystrophin protein DMD and related proteins DTNA and DTNB.

The protein localises to the cell membrane. It localises to the sarcolemma. It is found in the cytoplasm. Its subcellular location is the cytoskeleton. Functionally, adapter protein that binds to and probably organizes the subcellular localization of a variety of proteins. May link various receptors to the actin cytoskeleton and the dystrophin glycoprotein complex. The sequence is that of Gamma-2-syntrophin (Sntg2) from Mus musculus (Mouse).